Consider the following 645-residue polypeptide: MSNMDFLPISKEDLKKRNIDVLDFIVVTGDAYVDHPSFGTAIIGRVLEREGFTVGIIAQPNWNNIEDFKKLGKPKYGFLVNSGNIDSMVNHYTASKKKRHDDFYSPGGKSGYRPDRAVIVYCNKIKEAFKDSPIIIGGIEASLRRFAHYDYWDNSVRRSILEDSSADLLIYGMGEKPIVQVSNLLRYGMKIDSIKNVRGTTYIEKDISSLKDYIEIPSFEEVSTNKKSYAEAYKIQYYEQDSIRGKTLVQKHKERYVVQNPPQPPLSQEEMDEVYALPYARTYHPMYEAEGGIPAIKEVKFSITSHRGCYGSCSFCALTFHQGRVIQNRSQDSILKEANMMTNMKDFKGYIHDVGGPTANFRHRACKVQEKHGTCKNKQCVFPKACKNLIVDHKEYLSLLRKIRKIPNVKKVFIRSGIRFDYLMYDKNDEFFKELCEHHISGQLKVAPEHISDKVLNLMGKPTRNVYDSFVKKYYDINKKIHKNQFLVPYLMSSHPGSDLKAAIELAQYIKKMGYTPEQVQDFYPTPGSLSTTMYYTGINPLTEEKVYVPKDQKEKRMQRALLQFSILDNYDLVKEALIKAHREDLIGNGPDCLIPYNKPYKKSHKKNNVKNNNNHYNKNNNYNKNKDVSKKNKKNSLSKHKKRK.

Positions 295 to 566 (AIKEVKFSIT…RMQRALLQFS (272 aa)) constitute a Radical SAM core domain. Residues Cys-309, Cys-313, and Cys-316 each coordinate [4Fe-4S] cluster. The tract at residues 598-645 (NKPYKKSHKKNNVKNNNNHYNKNNNYNKNKDVSKKNKKNSLSKHKKRK) is disordered. Positions 600 to 609 (PYKKSHKKNN) are enriched in basic residues. Low complexity predominate over residues 610-624 (VKNNNNHYNKNNNYN). Basic residues predominate over residues 632 to 645 (KNKKNSLSKHKKRK).

It belongs to the UPF0313 family. Requires [4Fe-4S] cluster as cofactor.

This Clostridium botulinum (strain Loch Maree / Type A3) protein is UPF0313 protein CLK_3381.